A 30-amino-acid chain; its full sequence is Ampulexin 3 (30 aa).

A signal peptide spans 1-17 (MKAIMVLFYVMTLTIIG).

In terms of assembly, monomer. Expressed in venom sac and, to a lesser extent, in venom gland. Not expressed in brain.

Its subcellular location is the secreted. This Ampulex compressa (Emerald cockroach wasp) protein is Ampulexin 3.